The chain runs to 136 residues: Large ribosomal subunit protein uL16 (136 aa).

The protein belongs to the universal ribosomal protein uL16 family. Part of the 50S ribosomal subunit.

Its function is as follows. Binds 23S rRNA and is also seen to make contacts with the A and possibly P site tRNAs. This is Large ribosomal subunit protein uL16 from Vesicomyosocius okutanii subsp. Calyptogena okutanii (strain HA).